Consider the following 656-residue polypeptide: DNA ligase (656 aa).

NAD(+) is bound by residues 32 to 36 (DAVYD) and 81 to 82 (SL). The active-site N6-AMP-lysine intermediate is Lys-112. NAD(+)-binding residues include Arg-133, Glu-167, and Lys-306. Zn(2+)-binding residues include Cys-400, Cys-403, Cys-416, and Cys-421. A BRCT domain is found at 577–656 (KSSSVFSDKT…ELLKRLKELD (80 aa)).

This sequence belongs to the NAD-dependent DNA ligase family. LigA subfamily. The cofactor is Mg(2+). It depends on Mn(2+) as a cofactor.

It carries out the reaction NAD(+) + (deoxyribonucleotide)n-3'-hydroxyl + 5'-phospho-(deoxyribonucleotide)m = (deoxyribonucleotide)n+m + AMP + beta-nicotinamide D-nucleotide.. Functionally, DNA ligase that catalyzes the formation of phosphodiester linkages between 5'-phosphoryl and 3'-hydroxyl groups in double-stranded DNA using NAD as a coenzyme and as the energy source for the reaction. It is essential for DNA replication and repair of damaged DNA. In Helicobacter pylori (strain J99 / ATCC 700824) (Campylobacter pylori J99), this protein is DNA ligase.